The chain runs to 505 residues: AAA-ATPase At5g17760 (505 aa).

Residues 11–27 (TSVFTAYASMAGYMMMI) traverse the membrane as a helical segment. The tract at residues 136-155 (GGGGGVGGRGGGGGRRGGMD) is disordered. Residues 137–151 (GGGGVGGRGGGGGRR) are compositionally biased toward gly residues. Residue 260–267 (GPPGTGKS) coordinates ATP.

Belongs to the AAA ATPase family. BCS1 subfamily. Requires Mg(2+) as cofactor.

The protein resides in the membrane. It catalyses the reaction ATP + H2O = ADP + phosphate + H(+). This chain is AAA-ATPase At5g17760, found in Arabidopsis thaliana (Mouse-ear cress).